We begin with the raw amino-acid sequence, 114 residues long: Transmembrane protein 14C (114 aa).

Helical transmembrane passes span 8–28 (LVPL…GGII), 33–53 (AGSV…GLGS), 62–82 (NIWL…MRFY), and 87–107 (FMPA…LGIS).

The protein resides in the mitochondrion membrane. In terms of biological role, required for normal heme biosynthesis. The chain is Transmembrane protein 14C (TMEM14C) from Bos taurus (Bovine).